The chain runs to 458 residues: Cysteine--tRNA ligase (458 aa).

Residue Cys27 participates in Zn(2+) binding. A 'HIGH' region motif is present at residues Ile29 to His39. Zn(2+) is bound by residues Cys207, His232, and Glu236. Residues Lys265–Ser269 carry the 'KMSKS' region motif. ATP is bound at residue Lys268.

Belongs to the class-I aminoacyl-tRNA synthetase family. In terms of assembly, monomer. Zn(2+) serves as cofactor.

It localises to the cytoplasm. It catalyses the reaction tRNA(Cys) + L-cysteine + ATP = L-cysteinyl-tRNA(Cys) + AMP + diphosphate. In Dehalococcoides mccartyi (strain ATCC BAA-2266 / KCTC 15142 / 195) (Dehalococcoides ethenogenes (strain 195)), this protein is Cysteine--tRNA ligase.